Reading from the N-terminus, the 158-residue chain is uncharacterized protein (158 aa).

Positions 12-73 (LDEIDRAILR…LINPFKAGYE (62 aa)) constitute an HTH asnC-type domain. The segment at residues 31–50 (YSEISRRINVPESTVRARVN) is a DNA-binding region (H-T-H motif).

This is an uncharacterized protein from Pyrococcus horikoshii (strain ATCC 700860 / DSM 12428 / JCM 9974 / NBRC 100139 / OT-3).